We begin with the raw amino-acid sequence, 394 residues long: Obg-like ATPase 1 (394 aa).

The OBG-type G domain maps to 25–282; the sequence is LKIGIVGLPN…MPPDEAAKYC (258 aa). ATP contacts are provided by residues 34 to 39, 56 to 60, and 94 to 97; these read NVGKST, FCTID, and DIAG. 34-39 contacts GTP; that stretch reads NVGKST. Ser38 and Thr58 together coordinate Mg(2+). Residues Phe129 and Asn230 each contribute to the GTP site. ATP-binding positions include 230-231, Met231, and 263-265; these read NM and SCA. 263–265 is a GTP binding site; that stretch reads SCA. The TGS domain maps to 303–386; sequence HLIYFFTAGP…QDGDIIFFKF (84 aa).

This sequence belongs to the TRAFAC class OBG-HflX-like GTPase superfamily. OBG GTPase family. YchF/OLA1 subfamily. In terms of assembly, monomer (Potential). Interacts with GAP1. It depends on Mg(2+) as a cofactor.

It localises to the cell membrane. It is found in the cytoplasm. The protein resides in the cytosol. With respect to regulation, activated by GAP1. Functionally, hydrolyzes ATP, and can also hydrolyze GTP with lower efficiency. Has lower affinity for GTP (Potential). Exhibits GTPase activity. Exhibits similar binding affinities and hydrolytic activities toward both GTP and ATP. Binds to the 26 S ribosomal RNA in vitro, but not to the 5.8 S or 18 S rRNA. Confers sensitivity to salinity stress by suppressing the anti-oxidation enzymatic activities and increasing lipid peroxidation thus leading to the accumulation of reactive oxygen species (ROS). This is Obg-like ATPase 1 from Oryza sativa subsp. japonica (Rice).